Here is a 268-residue protein sequence, read N- to C-terminus: Phosphatidylglycerol--prolipoprotein diacylglyceryl transferase (268 aa).

7 consecutive transmembrane segments (helical) span residues 21–41 (WYGI…GRFA), 54–74 (FAII…VFVL), 93–113 (GLAI…YLPM), 122–142 (ADVV…GNFF), 173–193 (VMHP…GILL), 203–223 (GVVF…IESI), and 236–256 (VAQL…AWFL). Residue arginine 137 participates in a 1,2-diacyl-sn-glycero-3-phospho-(1'-sn-glycerol) binding.

It belongs to the Lgt family.

It localises to the cell membrane. It carries out the reaction L-cysteinyl-[prolipoprotein] + a 1,2-diacyl-sn-glycero-3-phospho-(1'-sn-glycerol) = an S-1,2-diacyl-sn-glyceryl-L-cysteinyl-[prolipoprotein] + sn-glycerol 1-phosphate + H(+). Its pathway is protein modification; lipoprotein biosynthesis (diacylglyceryl transfer). Functionally, catalyzes the transfer of the diacylglyceryl group from phosphatidylglycerol to the sulfhydryl group of the N-terminal cysteine of a prolipoprotein, the first step in the formation of mature lipoproteins. The polypeptide is Phosphatidylglycerol--prolipoprotein diacylglyceryl transferase (Symbiobacterium thermophilum (strain DSM 24528 / JCM 14929 / IAM 14863 / T)).